The primary structure comprises 223 residues: V-type ATP synthase subunit D (223 aa).

Residues 203 to 223 are disordered; sequence AREAEEEGGRPNPQVEIGAGL.

The protein belongs to the V-ATPase D subunit family.

Functionally, produces ATP from ADP in the presence of a proton gradient across the membrane. This chain is V-type ATP synthase subunit D, found in Thermus thermophilus (strain ATCC BAA-163 / DSM 7039 / HB27).